Consider the following 154-residue polypeptide: uncharacterized protein (154 aa).

The HTH marR-type domain maps to 14-146 (AMNLYRVFAR…LIVLLKKAGI (133 aa)). A DNA-binding region (H-T-H motif) is located at residues 60 to 83 (LQQIGSRLLLVSGNVTYVIDKLER).

This is an uncharacterized protein from Bacillus subtilis (strain 168).